Consider the following 438-residue polypeptide: Glutamine synthetase (438 aa).

The GS beta-grasp domain occupies 14 to 98; the sequence is EEVEYVDIRF…VHCNVVEPDT (85 aa). A GS catalytic domain is found at 106–438; the sequence is PRIALKAEAY…LAGDVFTKDQ (333 aa). Residues glutamate 130 and glutamate 132 each contribute to the Mg(2+) site. Aspartate 208 contributes to the ATP binding site. The Mg(2+) site is built by glutamate 213 and glutamate 220. Residues 264–265 and glycine 265 contribute to the L-glutamate site; that span reads NG. Histidine 269 contributes to the Mg(2+) binding site. ATP contacts are provided by residues 271 to 273 and serine 273; that span reads NMS. 3 residues coordinate L-glutamate: arginine 321, glutamate 327, and arginine 339. Residues arginine 339, arginine 344, and lysine 352 each coordinate ATP. Glutamate 357 contributes to the Mg(2+) binding site. Arginine 359 provides a ligand contact to L-glutamate. Position 397 is an O-AMP-tyrosine (tyrosine 397).

This sequence belongs to the glutamine synthetase family. In terms of assembly, oligomer of 12 subunits arranged in the form of two hexameric ring. Mg(2+) is required as a cofactor.

It is found in the cytoplasm. It catalyses the reaction L-glutamate + NH4(+) + ATP = L-glutamine + ADP + phosphate + H(+). With respect to regulation, the activity of this enzyme could be controlled by adenylation under conditions of abundant glutamine. Catalyzes the ATP-dependent biosynthesis of glutamine from glutamate and ammonia. The chain is Glutamine synthetase from Rhodobacter capsulatus (Rhodopseudomonas capsulata).